The primary structure comprises 933 residues: 2-oxoglutarate dehydrogenase E1 component (933 aa).

This sequence belongs to the alpha-ketoglutarate dehydrogenase family. In terms of assembly, homodimer. Part of the 2-oxoglutarate dehydrogenase (OGDH) complex composed of E1 (2-oxoglutarate dehydrogenase), E2 (dihydrolipoamide succinyltransferase) and E3 (dihydrolipoamide dehydrogenase); the complex contains multiple copies of the three enzymatic components (E1, E2 and E3). The cofactor is thiamine diphosphate.

It carries out the reaction N(6)-[(R)-lipoyl]-L-lysyl-[protein] + 2-oxoglutarate + H(+) = N(6)-[(R)-S(8)-succinyldihydrolipoyl]-L-lysyl-[protein] + CO2. Its function is as follows. E1 component of the 2-oxoglutarate dehydrogenase (OGDH) complex which catalyzes the decarboxylation of 2-oxoglutarate, the first step in the conversion of 2-oxoglutarate to succinyl-CoA and CO(2). This chain is 2-oxoglutarate dehydrogenase E1 component, found in Staphylococcus saprophyticus subsp. saprophyticus (strain ATCC 15305 / DSM 20229 / NCIMB 8711 / NCTC 7292 / S-41).